Reading from the N-terminus, the 436-residue chain is MFESKINPLWQSFILAVQEEVKPALGCTEPISLALAAAAAAAELDGTVERIDAWVSPNLMKNGMGVTVPGTGMVGLPIAAALGALGGDAKAGLEVLKDASAKAVADAKAMLAAGHVAVMLQEPCNDILFSRAKVYSGDSWACVTIVGDHTNIVRIETDKGVVFTQADNAQEEEKTSPLGVLSHTSLEEILAFVNAVPFDAIRFILDAARLNGALSQEGLRGSWGLHIGSTLAKQCDRGLLAKDLSTAILIRTSAASDARMGGATLPAMSNSGSGNQGITATVPVMVVAEHVGADDERLARALMLSHLSAIYIHHQLPRLSALCAATTAAMGAAAGMAWLIDGRYDTIAMAISSMIGDVSGMICDGASNSCAMKVSTSASAAWKAVLMALDDTAVTGNEGIVAHNVEQSIANLCSLACRSMQQTDKQIIEIMASKAH.

The protein belongs to the UPF0597 family.

This chain is UPF0597 protein YhaM, found in Salmonella newport (strain SL254).